The chain runs to 319 residues: tRNA-cytidine(32) 2-sulfurtransferase (319 aa).

Positions 45–50 match the PP-loop motif motif; that stretch reads SGGKDS. Positions 120, 123, and 211 each coordinate [4Fe-4S] cluster.

Belongs to the TtcA family. In terms of assembly, homodimer. The cofactor is Mg(2+). Requires [4Fe-4S] cluster as cofactor.

It localises to the cytoplasm. The enzyme catalyses cytidine(32) in tRNA + S-sulfanyl-L-cysteinyl-[cysteine desulfurase] + AH2 + ATP = 2-thiocytidine(32) in tRNA + L-cysteinyl-[cysteine desulfurase] + A + AMP + diphosphate + H(+). It participates in tRNA modification. Its function is as follows. Catalyzes the ATP-dependent 2-thiolation of cytidine in position 32 of tRNA, to form 2-thiocytidine (s(2)C32). The sulfur atoms are provided by the cysteine/cysteine desulfurase (IscS) system. This is tRNA-cytidine(32) 2-sulfurtransferase from Shewanella woodyi (strain ATCC 51908 / MS32).